Reading from the N-terminus, the 95-residue chain is Neutrophil antibiotic peptide NP-4 (95 aa).

An N-terminal signal peptide occupies residues 1 to 19 (MRTLALLAAILLVTLQAQA). Residues 20-62 (ELHSGMADDGVDQQQPRAQDLDVAVYIKQDETSPLEVLGAKAG) constitute a propeptide that is removed on maturation. 3 disulfides stabilise this stretch: cysteine 65–cysteine 93, cysteine 67–cysteine 82, and cysteine 72–cysteine 92.

The protein belongs to the alpha-defensin family.

Its subcellular location is the secreted. Functionally, microbicidal activity. The polypeptide is Neutrophil antibiotic peptide NP-4 (Oryctolagus cuniculus (Rabbit)).